The following is a 1176-amino-acid chain: Leucine--tRNA ligase, cytoplasmic (1176 aa).

2 residues coordinate L-leucine: Y52 and Y54. The short motif at 60–63 (HLGH) is the 'HIGH' region element. Residues 115 to 142 (PDFPDEEDEEEETNVKTEDTRIKDKAKG) form a disordered region. Positions 117–126 (FPDEEDEEEE) are enriched in acidic residues. Basic and acidic residues predominate over residues 127–139 (TNVKTEDTRIKDK). Position 167 is a phosphoserine (S167). Positions 260–509 (GPQEYTLLKL…DAGDALIYME (250 aa)) are editing domain. L594 and S597 together coordinate L-leucine. The short motif at 716-720 (KMSKS) is the 'KMSKS' region element. K719 lines the ATP pocket. Position 720 is a phosphoserine (S720). N6-acetyllysine occurs at positions 970 and 1047.

The protein belongs to the class-I aminoacyl-tRNA synthetase family.

The protein resides in the cytoplasm. It catalyses the reaction tRNA(Leu) + L-leucine + ATP = L-leucyl-tRNA(Leu) + AMP + diphosphate. The catalysed reaction is L-methionyl-tRNA(Leu) + H2O = tRNA(Leu) + L-methionine + H(+). Its activity is regulated as follows. 5-fluoro-1,3-dihydro-1-hydroxy-1,2-benzoxaborole inhibits LARS1 by forming a covalent adduct with the 3' adenosine of tRNA(Leu) at the editing site, thus locking the enzyme in an inactive conformation. Aminoacyl-tRNA synthetase that catalyzes the specific attachment of leucine to its cognate tRNA (tRNA(Leu)). It performs tRNA aminoacylation in a two-step reaction: Leu is initially activated by ATP to form a leucyl-adenylate (Leu-AMP) intermediate; then the leucyl moiety is transferred to the acceptor 3' end of the tRNA to yield leucyl-tRNA. To improve the fidelity of catalytic reactions, it is also able to hydrolyze misactivated aminoacyl-adenylate intermediates (pre-transfer editing) and mischarged aminoacyl-tRNAs (post-transfer editing). This is Leucine--tRNA ligase, cytoplasmic (LARS1) from Pongo abelii (Sumatran orangutan).